The following is a 185-amino-acid chain: MLQTIYNETKDLMQKSIQALNREFSTLRSAKVSVNILDHIKVDYYGTPTALNQVGSVMSLDATTLQISPWEKNLLKEIERAIQEANIGVNPNNDGETIKLFFPPMTTEQRKLIAKDAKAMGEKAKVAVRNIRQDANNKVKKLEKDKEISEDESKKAQEQVQKITDEAIKKIDESVKNKEDAILKV.

The disordered stretch occupies residues 138-159 (KVKKLEKDKEISEDESKKAQEQ).

The protein belongs to the RRF family.

It localises to the cytoplasm. Its function is as follows. Responsible for the release of ribosomes from messenger RNA at the termination of protein biosynthesis. May increase the efficiency of translation by recycling ribosomes from one round of translation to another. The chain is Ribosome-recycling factor from Helicobacter acinonychis (strain Sheeba).